Reading from the N-terminus, the 433-residue chain is Chitinase-like protein EN03 (433 aa).

A signal peptide spans 1 to 16 (MKLFIALVGLLALAKA). Residues 23-433 (SKVLCYYDSR…PILRAAKYRL (411 aa)) form the GH18 domain. An intrachain disulfide couples Cys-27 to Cys-54. N-linked (GlcNAc...) asparagine glycosylation occurs at Asn-220. Cysteines 337 and 418 form a disulfide.

This sequence belongs to the glycosyl hydrolase 18 family. IDGF subfamily.

It localises to the secreted. The polypeptide is Chitinase-like protein EN03 (Bombyx mori (Silk moth)).